The following is a 419-amino-acid chain: ATP-dependent RNA helicase RhlB (419 aa).

Positions 9–37 (QRFSDLALHRIVQQAIKEKGFEFCTPIQA) match the Q motif motif. The Helicase ATP-binding domain maps to 40-217 (LPITLKGQDI…FEHMNDPQYV (178 aa)). 53–60 (AQTGTGKT) lines the ATP pocket. The DEAD box signature appears at 163 to 166 (DEAD). In terms of domain architecture, Helicase C-terminal spans 241 to 388 (KMALLMTLLE…VSQYDAKALI (148 aa)).

It belongs to the DEAD box helicase family. RhlB subfamily. In terms of assembly, component of the RNA degradosome, which is a multiprotein complex involved in RNA processing and mRNA degradation.

It localises to the cytoplasm. It catalyses the reaction ATP + H2O = ADP + phosphate + H(+). DEAD-box RNA helicase involved in RNA degradation. Has RNA-dependent ATPase activity and unwinds double-stranded RNA. The polypeptide is ATP-dependent RNA helicase RhlB (Histophilus somni (strain 2336) (Haemophilus somnus)).